The chain runs to 752 residues: Probable beta-glucosidase D (752 aa).

An N-terminal signal peptide occupies residues 1-18 (MRFVSLAVGAALLGAAGA). N-linked (GlcNAc...) asparagine glycans are attached at residues asparagine 187 and asparagine 237. Aspartate 265 is a catalytic residue. N-linked (GlcNAc...) asparagine glycosylation is found at asparagine 299, asparagine 343, asparagine 441, asparagine 510, asparagine 532, asparagine 571, asparagine 586, asparagine 638, asparagine 661, and asparagine 743.

Belongs to the glycosyl hydrolase 3 family.

Its subcellular location is the secreted. The catalysed reaction is Hydrolysis of terminal, non-reducing beta-D-glucosyl residues with release of beta-D-glucose.. It participates in glycan metabolism; cellulose degradation. In terms of biological role, beta-glucosidases are one of a number of cellulolytic enzymes involved in the degradation of cellulosic biomass. Catalyzes the last step releasing glucose from the inhibitory cellobiose. The chain is Probable beta-glucosidase D (bglD) from Aspergillus oryzae (strain ATCC 42149 / RIB 40) (Yellow koji mold).